A 548-amino-acid chain; its full sequence is MPHDRKNSSRRAWAALCAAVLAVSGALVGVAAPASAVPATIPLTITNDSGRGPIYLYVLGERDGVAGWADAGGTFHPWPGGVGPVPVPAPDASIAGPGPGQSVTIRLPKLSGRVYYSYGQKMTFQIVLDGRLVQPAVQNDSDPNRNILFNWTEYTLNDGGLWINSTQVDHWSAPYQVGVQRADGQVLSTGMLKPNGYEAFYTALESAGWGGLVQRAPDGSRLRALNPSHGIDVGKISSASIDSYVTEVWNSYRTRDMCVTPFSHEPGTQFRGRVDGDWFRFRNGSGQEVAAFKKPDASSVYGCHKDLQAPNDHVVGPIARTLCAALVRTTALTNPNQPDANSAGFYQDARTNVYAKLAHQQMANGKAYAFAFDDVGAHESLVHDGNPQAAYIKLDPFTGTATPIANGGSTEQPGTPGGLPAGTGALRIGSTLCLDVPWADPTDTNQVQLATCSGNAAQQWTRGTDGTVRALGKCLDVARSGTADGTAVWIYTCNGTGAQKWTYDSATKALRNPQSGKCLDAQGGAPLRDGQKVQLWTCNQTEAQRWTL.

Residues 1–36 (MPHDRKNSSRRAWAALCAAVLAVSGALVGVAAPASA) constitute a signal peptide (tat-type signal). The region spanning 38–396 (PATIPLTITN…PQAAYIKLDP (359 aa)) is the GH64 domain. Glu153 functions as the Proton donor in the catalytic mechanism. Residue Asp169 is the Proton acceptor of the active site. The Ricin B-type lectin domain maps to 422 to 548 (GTGALRIGST…NQTEAQRWTL (127 aa)).

It belongs to the glycosyl hydrolase 64 family. In terms of processing, predicted to be exported by the Tat system. The position of the signal peptide cleavage has not been experimentally proven.

The protein resides in the periplasm. It carries out the reaction Hydrolysis of (1-&gt;3)-beta-D-glucosidic linkages in (1-&gt;3)-beta-D-glucans.. Lysis of cellular walls containing beta-1,3-glucans. Implicated in the defense against fungal pathogens. This Arthrobacter sp. (strain YCWD3) protein is Glucan endo-1,3-beta-glucosidase (glcI).